A 374-amino-acid chain; its full sequence is Putative cullin-like protein 2 (374 aa).

The protein belongs to the cullin family.

The chain is Putative cullin-like protein 2 from Arabidopsis thaliana (Mouse-ear cress).